The sequence spans 140 residues: Nucleoside diphosphate kinase (140 aa).

ATP is bound by residues lysine 11, phenylalanine 59, arginine 87, threonine 93, arginine 104, and asparagine 114. Histidine 117 acts as the Pros-phosphohistidine intermediate in catalysis.

The protein belongs to the NDK family. In terms of assembly, homotetramer. Mg(2+) serves as cofactor.

The protein localises to the cytoplasm. The enzyme catalyses a 2'-deoxyribonucleoside 5'-diphosphate + ATP = a 2'-deoxyribonucleoside 5'-triphosphate + ADP. It catalyses the reaction a ribonucleoside 5'-diphosphate + ATP = a ribonucleoside 5'-triphosphate + ADP. Its function is as follows. Major role in the synthesis of nucleoside triphosphates other than ATP. The ATP gamma phosphate is transferred to the NDP beta phosphate via a ping-pong mechanism, using a phosphorylated active-site intermediate. This Hyphomonas neptunium (strain ATCC 15444) protein is Nucleoside diphosphate kinase.